A 299-amino-acid polypeptide reads, in one-letter code: Peroxisomal biogenesis factor 19 (299 aa).

The interval 1–61 is disordered; that stretch reads MAAAEEGCGV…KRAPGDTAKD (61 aa). Residue Ala-2 is modified to N-acetylalanine. The interval 2 to 56 is docking to the peroxisome membrane and binding to PEX3; that stretch reads AAAEEGCGVGVEDDRELEELLESALDDFDKAKPSPEHAPTISAPDASGPQKRAPG. A necessary for PEX19 function on peroxisome biogenesis region spans residues 2-91; it reads AAAEEGCGVG…QATAEFEKAM (90 aa). Acidic residues predominate over residues 12 to 27; the sequence is VEDDRELEELLESALD. Phosphoserine is present on residues Ser-35 and Ser-66. Position 236 is a phosphothreonine (Thr-236). Cys-296 is subject to Cysteine methyl ester. Cys-296 carries S-farnesyl cysteine lipidation. A propeptide spans 297–299 (removed in mature form); it reads LIM.

It belongs to the peroxin-19 family. Interacts with a broad range of peroxisomal membrane proteins, including PEX3, PEX10, PEX11A, PEX11B, PEX12, PEX13, PEX14 and PEX16, PXMP2/PMP22, PXMP4/PMP24, SLC25A17/PMP34, ABCD1/ALDP, ABCD2/ALDRP, and ABCD3/PMP70. Also interacts with the tumor suppressor CDKN2A/p19ARF.

The protein localises to the cytoplasm. The protein resides in the peroxisome membrane. Functionally, necessary for early peroxisomal biogenesis. Acts both as a cytosolic chaperone and as an import receptor for peroxisomal membrane proteins (PMPs). Binds and stabilizes newly synthesized PMPs in the cytoplasm by interacting with their hydrophobic membrane-spanning domains, and targets them to the peroxisome membrane by binding to the integral membrane protein PEX3. Excludes CDKN2A from the nucleus and prevents its interaction with MDM2, which results in active degradation of TP53. The chain is Peroxisomal biogenesis factor 19 (Pex19) from Mus musculus (Mouse).